We begin with the raw amino-acid sequence, 679 residues long: Protein hook (679 aa).

The Calponin-homology (CH) domain occupies 5–123 (NGMYYSLLEW…RLLQLVLGCA (119 aa)). Positions 140-627 (EEELQANIMR…SKTKMSTMEE (488 aa)) form a coiled coil.

This sequence belongs to the hook family. Homodimer. Interacts with microtubules via its N-terminus.

The protein localises to the cytoplasm. The protein resides in the cytoskeleton. Its subcellular location is the endosome. It localises to the synapse. Its function is as follows. Involved in endocytic trafficking by stabilizing organelles of the endocytic pathway. Probably acts as a cytoskeletal linker protein required to tether endosome vesicles to the cytoskeleton. Involved in modulation of endocytosis at stages required for down-regulation of membrane proteins that control synapse size. Not involved in synaptic vesicle recycling. Required in R7 cells for boss endocytosis into multivesicular bodies (MVBs). Has a role in regulating adult longevity. This is Protein hook from Drosophila mojavensis (Fruit fly).